The primary structure comprises 592 residues: Aspartate--tRNA ligase (592 aa).

Position 180 (glutamate 180) interacts with L-aspartate. Residues 204-207 (QLFK) form an aspartate region. Arginine 226 serves as a coordination point for L-aspartate. ATP is bound by residues 226-228 (RDE) and glutamine 235. Position 455 (histidine 455) interacts with L-aspartate. Residue glutamate 489 coordinates ATP. L-aspartate is bound at residue arginine 496. 541–544 (GFDR) is a binding site for ATP.

Belongs to the class-II aminoacyl-tRNA synthetase family. Type 1 subfamily. In terms of assembly, homodimer.

The protein resides in the cytoplasm. The enzyme catalyses tRNA(Asp) + L-aspartate + ATP = L-aspartyl-tRNA(Asp) + AMP + diphosphate. Functionally, catalyzes the attachment of L-aspartate to tRNA(Asp) in a two-step reaction: L-aspartate is first activated by ATP to form Asp-AMP and then transferred to the acceptor end of tRNA(Asp). The chain is Aspartate--tRNA ligase from Clostridium tetani (strain Massachusetts / E88).